The sequence spans 732 residues: Polyribonucleotide nucleotidyltransferase (732 aa).

Mg(2+) is bound by residues D516 and D522. The KH domain occupies 582–642 (PSSHTITVHP…PKVIAACDYI (61 aa)). The S1 motif domain occupies 659 to 726 (GDILKGKIKR…KGHKIELGLR (68 aa)).

It belongs to the polyribonucleotide nucleotidyltransferase family. Requires Mg(2+) as cofactor.

The protein resides in the cytoplasm. The catalysed reaction is RNA(n+1) + phosphate = RNA(n) + a ribonucleoside 5'-diphosphate. Functionally, involved in mRNA degradation. Catalyzes the phosphorolysis of single-stranded polyribonucleotides processively in the 3'- to 5'-direction. In Nitratiruptor sp. (strain SB155-2), this protein is Polyribonucleotide nucleotidyltransferase.